A 451-amino-acid polypeptide reads, in one-letter code: AP-4 complex subunit mu (451 aa).

An MHD domain is found at 184–450 (REEIFVDIIE…VTQANSYVAR (267 aa)).

The protein belongs to the adaptor complexes medium subunit family. As to quaternary structure, adaptor protein complex 4 (AP-4) is a heterotetramer composed of two large adaptins (epsilon-type subunit and beta-type subunit), a medium adaptin (mu-type subunit) and a small adaptin (sigma-type subunit).

Its subcellular location is the golgi apparatus. The protein resides in the trans-Golgi network. It is found in the membrane. The protein localises to the coated pit. Functionally, subunit of novel type of clathrin- or non-clathrin-associated protein coat involved in targeting proteins from the trans-Golgi network (TGN) to the endosomal-lysosomal system. In Arabidopsis thaliana (Mouse-ear cress), this protein is AP-4 complex subunit mu (AP4M).